Reading from the N-terminus, the 238-residue chain is Thiamine import ATP-binding protein ThiQ (238 aa).

An ABC transporter domain is found at 1 to 234 (MSSTALAVKG…RDIAAINRFL (234 aa)). 36–43 (GASGSGKS) serves as a coordination point for ATP.

The protein belongs to the ABC transporter superfamily. Thiamine importer (TC 3.A.1.19.1) family. The complex is composed of two ATP-binding proteins (ThiQ), two transmembrane proteins (ThiP) and a solute-binding protein (ThiB).

Its subcellular location is the cell inner membrane. The enzyme catalyses thiamine(out) + ATP + H2O = thiamine(in) + ADP + phosphate + H(+). Its function is as follows. Part of the ABC transporter complex ThiBPQ involved in thiamine import. Responsible for energy coupling to the transport system. The sequence is that of Thiamine import ATP-binding protein ThiQ from Rhizobium meliloti (strain 1021) (Ensifer meliloti).